A 434-amino-acid polypeptide reads, in one-letter code: Tryptophan synthase beta chain (434 aa).

Lysine 92 is modified (N6-(pyridoxal phosphate)lysine). The segment at 411–434 (VKGGVATSPESFDASGAKGAGSQS) is disordered.

Belongs to the TrpB family. As to quaternary structure, tetramer of two alpha and two beta chains. Pyridoxal 5'-phosphate is required as a cofactor.

It catalyses the reaction (1S,2R)-1-C-(indol-3-yl)glycerol 3-phosphate + L-serine = D-glyceraldehyde 3-phosphate + L-tryptophan + H2O. The protein operates within amino-acid biosynthesis; L-tryptophan biosynthesis; L-tryptophan from chorismate: step 5/5. The beta subunit is responsible for the synthesis of L-tryptophan from indole and L-serine. This is Tryptophan synthase beta chain from Polaromonas naphthalenivorans (strain CJ2).